A 444-amino-acid chain; its full sequence is Bystin (444 aa).

2 disordered regions span residues 1 to 37 (MAKK…HQKQ) and 53 to 85 (ALAQ…TAGE). Residues 24 to 34 (SRKRSKVPKTH) show a composition bias toward basic residues. Positions 73–84 (AAFAVAGAATAG) are enriched in low complexity.

This sequence belongs to the bystin family. In terms of assembly, component of the 40S pre-ribosome. As to expression, highly expressed in flowers and at lower levels in roots, hypocotyls, stems, leaves, siliques and seeds.

Its subcellular location is the nucleus. The protein localises to the nucleolus. It is found in the nucleoplasm. Essential protein required during embryogenesis and pollen development. Required for processing of 20S pre-rRNA precursor and biogenesis of 40S ribosomal subunits. The sequence is that of Bystin from Arabidopsis thaliana (Mouse-ear cress).